Reading from the N-terminus, the 611-residue chain is Probable potassium transport system protein Kup 1 (611 aa).

The next 12 membrane-spanning stretches (helical) occupy residues 6-26 (LMVGALGVVYGDIGTSPLYTM), 44-64 (MLSLIVWTLLITTSIKYVAVV), 90-110 (LGVIAMGLIGAALLYGDGAIT), 129-149 (ISPYIVTLSAIILVGLFALQA), 158-178 (LFGPVMIAWFIVIGILGLFGI), 193-213 (GLSYLFSHGMTGFLVLGAVFL), 237-257 (WYGLVLPCLILNYAGQTAVVV), 280-300 (LVALATVATIIASQAIISGAF), 328-348 (IYIGFVNWTLMALTLGLTLGF), 354-374 (LAAAFGIAVSLTMLLTSILMF), 385-405 (LAASLLTAGLFVVVDMSFVSA), and 410-430 (VLEGGWFPLVVAAVIFFLMMT).

This sequence belongs to the HAK/KUP transporter (TC 2.A.72) family.

It is found in the cell inner membrane. It carries out the reaction K(+)(in) + H(+)(in) = K(+)(out) + H(+)(out). In terms of biological role, transport of potassium into the cell. Likely operates as a K(+):H(+) symporter. The protein is Probable potassium transport system protein Kup 1 of Bradyrhizobium sp. (strain BTAi1 / ATCC BAA-1182).